We begin with the raw amino-acid sequence, 93 residues long: uncharacterized protein (93 aa).

Residues 36–69 (SEERLLSRLFEEMDELREAVEKEDWENLRDELLD) are a coiled coil.

This is an uncharacterized protein from Archaeoglobus fulgidus (strain ATCC 49558 / DSM 4304 / JCM 9628 / NBRC 100126 / VC-16).